A 577-amino-acid chain; its full sequence is MNIFDLYLDKIIILIKKLNKDGSLELPESLNGVNVDIPPSNFDCDISTNVAMVLSKANKKSPIDIANILIELIKNEDEKIESISAAKPGFINIKFKTIYWNNFIKSINQNHKDYGVNNKEKKQKYLIEFVSANPTGPLHVGHCRGAILGDVISNILIFNKHDVSKEYYVNDYGNQILNFTKSVFFRIREILFNEKFPIENSDLYPGDYLVGIAKNIIKSNKVLKFDKFENVSKELTLLSVSESLKLIKNNLSNLGIVHDRFTSETDIVLNNEVQKAIDKLKEKKLVYSGKIKAPKGEDDENWVEREQLLFKSTDFGDDKDRALQKSDKSWTYFASDVAYHDNKLNRNYDTLINILGADHAGYIKRITSVVEALSGDKKKLICKVSQLVKLIKDGKPFKMSKRKGDYITVEDLIAEVGKDATRFIMLNRSSDVELDFDFTKVKEKSKDNPLYYVQYCYARISSVFRHVNLNIENDLNIKDYEFAYTGDEIKILKKIAEWPKCIEAASLRLEPHRIPVYLYELSSEFHSYWNMGKEDQSKRFINEQKKISNDKLVFLKVISNVIKSGMDIVGVDTPQKM.

The 'HIGH' region motif lies at 132 to 142 (ANPTGPLHVGH).

It belongs to the class-I aminoacyl-tRNA synthetase family. Monomer.

It is found in the cytoplasm. The catalysed reaction is tRNA(Arg) + L-arginine + ATP = L-arginyl-tRNA(Arg) + AMP + diphosphate. In Pelagibacter ubique (strain HTCC1062), this protein is Arginine--tRNA ligase.